The primary structure comprises 236 residues: UPF0257 lipoprotein YnfC (236 aa).

Residues 1–16 (MKKPLLLTLLCMILAG) form the signal peptide. Cys-17 carries N-palmitoyl cysteine lipidation. The S-diacylglycerol cysteine moiety is linked to residue Cys-17.

This sequence belongs to the UPF0257 family.

It is found in the cell membrane. This is UPF0257 lipoprotein YnfC from Salmonella schwarzengrund (strain CVM19633).